The chain runs to 693 residues: MARQVPLNRCRNIGIMAHIDAGKTTTTERVLFYTGITHRIGEVHEGTATMDYMEQEQERGITITSAATTCMWNNIRINIIDTPGHVDFTAEVERSLRVLDGAVALFDSVSGVQPQTETVWRQGDKYRVPRICFVNKMDKAGADFEHVIETIRKRLGARPVAIQIPIGAEANFKGVVDLIEMRAILWHDETMGAKYSVEEIPADLMKKAEAFRMQLIETVAENDDEMLHKFLEGETPTVEELKKALRKATIDMHVFPVLCGTAFKNKGVQTLLDAVVDYLPSPLDVPPVEGIDPSDTSVVMTREAKDDAPFSALGFKLINDPFGKLGFIRVYSGVLKTGDTVLNPRTGKTERVGRLVKMHANKREDITEIYAGDICAAVGLKELKTGDTLCATTDPIALSAIDFPEPVISVAVEPKTKGDQEKMGIALSKLADEDPTFKVRTDEDSGQTIISGMGELHLEILVDRMKREHKVEANVGEPKVAFRETIRKASEAEGKYIRQTGGSGNYGHVKIRLEPNEPGKGFEFIDAIKGGVVPREYIKPTEQGIREALQNGVLAGYEMVDVKATLFDGSYHDVDSNEMAFKIAGSMAFKEAAKKASPVLLEPVMSVEVTVPEEHMGTIIGDINSRRGRIEGMEHSGGSQVIRAIVPLKEMFGYVNDIRSSTQGRASYTMQFARYEEAPRMISEEIIGRNQGK.

Residues 8 to 283 (NRCRNIGIMA…AVVDYLPSPL (276 aa)) form the tr-type G domain. GTP contacts are provided by residues 17–24 (AHIDAGKT), 81–85 (DTPGH), and 135–138 (NKMD).

It belongs to the TRAFAC class translation factor GTPase superfamily. Classic translation factor GTPase family. EF-G/EF-2 subfamily.

The protein localises to the cytoplasm. In terms of biological role, catalyzes the GTP-dependent ribosomal translocation step during translation elongation. During this step, the ribosome changes from the pre-translocational (PRE) to the post-translocational (POST) state as the newly formed A-site-bound peptidyl-tRNA and P-site-bound deacylated tRNA move to the P and E sites, respectively. Catalyzes the coordinated movement of the two tRNA molecules, the mRNA and conformational changes in the ribosome. This chain is Elongation factor G, found in Acidobacterium capsulatum (strain ATCC 51196 / DSM 11244 / BCRC 80197 / JCM 7670 / NBRC 15755 / NCIMB 13165 / 161).